A 768-amino-acid chain; its full sequence is Cullin-3 (768 aa).

An N-acetylserine modification is found at Ser-2. The interval 2 to 41 (SNLSKGTGSRKDTKMRIRAFPMTMDEKYVNSIWDLLKNAI) is interaction with KLHL18. Ser-585 is subject to Phosphoserine. The segment at 677–698 (VAAKQGESDPERKETRQKVDDD) is disordered. Basic and acidic residues predominate over residues 682-698 (GESDPERKETRQKVDDD). The 63-residue stretch at 698 to 760 (DRKHEIEAAI…REYLARTPED (63 aa)) folds into the Cullin neddylation domain. Lys-712 is covalently cross-linked (Glycyl lysine isopeptide (Lys-Gly) (interchain with G-Cter in NEDD8)).

It belongs to the cullin family. Forms neddylation-dependent homodimers. Component of multiple BCR (BTB-CUL3-RBX1) E3 ubiquitin-protein ligase complexes formed of CUL3, RBX1 and a variable BTB domain-containing protein acting as both, adapter to cullin and substrate recognition subunit. The BCR complex may be active as a heterodimeric complex, in which NEDD8, covalently attached to one CUL3 molecule, binds to the C-terminus of a second CUL3 molecule. Interacts with RBX1, RNF7, CYCE and TIP120A/CAND1. Part of the BCR(SPOP) containing SPOP, and of BCR containing homodimeric SPOPL or the heterodimer formed by SPOP and SPOPL. Part of the probable BCR(KLHL9-KLHL13) complex with BTB domain proteins KLHL9 and KLHL13. Part of the BCR(KLHL41) complex containing KLHL41. Component of the BCR(KLHL12) E3 ubiquitin ligase complex, at least composed of CUL3 and KLHL12 and RBX1. Component of the BCR(KLHL3) E3 ubiquitin ligase complex, at least composed of CUL3 and KLHL3 and RBX1. Part of the BCR(ENC1) complex containing ENC1. Part of a complex consisting of BMI1/PCGF4, CUL3 and SPOP. Part of a complex consisting of BRMS1, CUL3 and SPOP. Component of the BCR(KLHL21) E3 ubiquitin ligase complex, at least composed of CUL3, KLHL21 and RBX1. Component of the BCR(KLHL22) E3 ubiquitin ligase complex, at least composed of CUL3, KLHL22 and RBX1. Component of the BCR(KLHL25) E3 ubiquitin ligase complex, at least composed of CUL3, KLHL25 and RBX1. Part of a complex consisting of MACROH2A1, CUL3 and SPOP. Component of the BCR(KLHL42) E3 ubiquitin ligase complex, at least composed of CUL3 and KLHL42. Interacts with KLHL42 (via the BTB domain). Interacts with KATNA1; the interaction is enhanced by KLHL42. Component of the BCR(KBTBD8) E3 ubiquitin ligase complex, at least composed of CUL3, KBTBD8 and RBX1. Interacts with KCTD5, KLHL9, KLHL11, KLHL13, GAN, ZBTB16, KLHL3, KLHL15, KLHL20, KLHL36, GMCL2, BTBD1. Part of a complex that contains CUL3, RBX1 and GAN. Interacts (via BTB domain) with KLHL17; the interaction regulates surface GRIK2 expression. Interacts with KCTD7. Part of the BCR(GAN) complex containing GAN. Part of the BCR(KEAP1) complex containing KEAP1. Interacts with KLHL10. Interacts with KAT5 and ATF2. Interacts with KCTD17 in the BCR(KCTD17) E3 ubiquitin ligase complex, at least composed of CUL3, KCTD17 and RBX1. Interacts (when neddylated) with ARIH1; leading to activate the E3 ligase activity of ARIH1. Interacts with COPS9 isoform 2. Interacts with PPP2R5B; this interaction is indirect and mediated through KLHL15-binding and leads to PPP2R5B proteasomal degradation. Interacts with RBBP8/CtIP; this interaction is indirect and mediated through KLHL15-binding and leads to RBBP8 proteasomal degradation. Interacts with KLHL24 in the BCR(KLHL24) E3 ubiquitin ligase complex, composed of CUL3, RBX1 and KLHL24. Interacts with RHOBTB2. Interacts with AURKA and KLHL18 (via BTB domain). Interacts (unneddylated form) with DCUN1D1, DCUN1D2, DCUN1D3, DCUN1D4 and DCUN1D5; these interactions promote the cullin neddylation. Component of a BCR3 (BTB-CUL3-RBX1) E3 ubiquitin ligase complex, also named Cul3-RING ubiquitin ligase complex CUL3(KBTBD6/7), composed of CUL3, RBX1, KBTBD6 and KBTBD7. Component of the BCR(KBTBD2) E3 ubiquitin ligase complex, at least composed of CUL3, KBTBD2 and RBX1. Interacts with KBTBD2 (via the BTB domain). Component of the BCR(KBTBD4) E3 ubiquitin ligase complex, at least composed of CUL3, KBTBD4 and RBX1. Component of the BCR(ARMC5) E3 ubiquitin ligase complex, composed of CUL3, ARMC5 and RBX1. Neddylated. Attachment of NEDD8 is required for the E3 ubiquitin-protein ligase activity of the BCR complex. Deneddylated via its interaction with the COP9 signalosome (CSN) complex. As to expression, brain, spermatozoa, and testis (at protein level). Widely expressed.

It is found in the nucleus. Its subcellular location is the golgi apparatus. The protein localises to the cell projection. It localises to the cilium. The protein resides in the flagellum. It is found in the cytoplasm. Its subcellular location is the cytoskeleton. The protein localises to the spindle. It localises to the microtubule organizing center. The protein resides in the centrosome. It is found in the spindle pole. It functions in the pathway protein modification; protein ubiquitination. Its function is as follows. Core component of multiple cullin-RING-based BCR (BTB-CUL3-RBX1) E3 ubiquitin-protein ligase complexes which mediate the ubiquitination and subsequent proteasomal degradation of target proteins. BCR complexes and ARIH1 collaborate in tandem to mediate ubiquitination of target proteins. As a scaffold protein may contribute to catalysis through positioning of the substrate and the ubiquitin-conjugating enzyme. The E3 ubiquitin-protein ligase activity of the complex is dependent on the neddylation of the cullin subunit and is inhibited by the association of the deneddylated cullin subunit with TIP120A/CAND1. The functional specificity of the BCR complex depends on the BTB domain-containing protein as the substrate recognition component. BCR(KLHL42) is involved in ubiquitination of KATNA1. BCR(SPOP) is involved in ubiquitination of BMI1/PCGF4, BRMS1, MACROH2A1 and DAXX, GLI2 and GLI3. Can also form a cullin-RING-based BCR (BTB-CUL3-RBX1) E3 ubiquitin-protein ligase complex containing homodimeric SPOPL or the heterodimer formed by SPOP and SPOPL; these complexes have lower ubiquitin ligase activity. BCR(KLHL9-KLHL13) controls the dynamic behavior of AURKB on mitotic chromosomes and thereby coordinates faithful mitotic progression and completion of cytokinesis. BCR(KLHL12) is involved in ER-Golgi transport by regulating the size of COPII coats, thereby playing a key role in collagen export, which is required for embryonic stem (ES) cells division: BCR(KLHL12) acts by mediating monoubiquitination of SEC31 (SEC31A or SEC31B). BCR(KLHL3) acts as a regulator of ion transport in the distal nephron; by mediating ubiquitination of WNK4. The BCR(KLHL20) E3 ubiquitin ligase complex is involved in interferon response and anterograde Golgi to endosome transport: it mediates both ubiquitination leading to degradation and 'Lys-33'-linked ubiquitination. The BCR(KLHL21) E3 ubiquitin ligase complex regulates localization of the chromosomal passenger complex (CPC) from chromosomes to the spindle midzone in anaphase and mediates the ubiquitination of AURKB. The BCR(KLHL22) ubiquitin ligase complex mediates monoubiquitination of PLK1, leading to PLK1 dissociation from phosphoreceptor proteins and subsequent removal from kinetochores, allowing silencing of the spindle assembly checkpoint (SAC) and chromosome segregation. The BCR(KLHL22) ubiquitin ligase complex is also responsible for the amino acid-stimulated 'Lys-48' polyubiquitination and proteasomal degradation of DEPDC5. Through the degradation of DEPDC5, releases the GATOR1 complex-mediated inhibition of the TORC1 pathway. The BCR(KLHL25) ubiquitin ligase complex is involved in translational homeostasis by mediating ubiquitination and subsequent degradation of hypophosphorylated EIF4EBP1 (4E-BP1). The BCR(KLHL25) ubiquitin ligase complex is also involved in lipid synthesis by mediating ubiquitination and degradation of ACLY. The BCR(KBTBD8) complex acts by mediating monoubiquitination of NOLC1 and TCOF1, leading to remodel the translational program of differentiating cells in favor of neural crest specification. Involved in ubiquitination of cyclin E and of cyclin D1 (in vitro) thus involved in regulation of G1/S transition. Involved in the ubiquitination of KEAP1, ENC1 and KLHL41. In concert with ATF2 and RBX1, promotes degradation of KAT5 thereby attenuating its ability to acetylate and activate ATM. The BCR(KCTD17) E3 ubiquitin ligase complex mediates ubiquitination and degradation of TCHP, a down-regulator of cilium assembly, thereby inducing ciliogenesis. The BCR(KLHL24) E3 ubiquitin ligase complex mediates ubiquitination of KRT14, controls KRT14 levels during keratinocytes differentiation, and is essential for skin integrity. The BCR(KLHL18) E3 ubiquitin ligase complex mediates the ubiquitination of AURKA leading to its activation at the centrosome which is required for initiating mitotic entry. The BCR(KEAP1) E3 ubiquitin ligase complex acts as a key sensor of oxidative and electrophilic stress by mediating ubiquitination and degradation of NFE2L2/NRF2, a transcription factor regulating expression of many cytoprotective genes. As part of the CUL3(KBTBD6/7) E3 ubiquitin ligase complex functions mediates 'Lys-48' ubiquitination and proteasomal degradation of TIAM1. By controlling the ubiquitination of that RAC1 guanine exchange factors (GEF), regulates RAC1 signal transduction and downstream biological processes including the organization of the cytoskeleton, cell migration and cell proliferation. The BCR(KBTBD4) E3 ubiquitin ligase complex targets CoREST corepressor complex components RCOR1, KDM1A/LSD1 and HDAC2 for proteasomal degradation with RCOR1 likely to be the primary target while degradation of KDM1A and HDAC2 is likely due to their association with RCOR1. It also targets RCOR3, MIER2 and MIER3 for proteasomal degradation as well as associated proteins ZNF217 and RREB1 with degradation being dependent on the presence of an ELM2 domain in the target proteins. The BCR(ARMC5) complex mediates premature transcription termination of transcripts that are unfavorably configured for transcriptional elongation by mediating ubiquitination of Pol II subunit POLR2A. Required for 'Lys-63'-linked ubiquitination of large ribosomal subunit protein MRPL12. The protein is Cullin-3 of Homo sapiens (Human).